A 502-amino-acid polypeptide reads, in one-letter code: Protein MGF 505-5R (502 aa).

Belongs to the asfivirus MGF 505 family.

Its function is as follows. Plays a role in virus cell tropism, and may be required for efficient virus replication in macrophages. The protein is Protein MGF 505-5R of African swine fever virus (isolate Tick/Malawi/Lil 20-1/1983) (ASFV).